Here is a 319-residue protein sequence, read N- to C-terminus: MHVTPLRLIFMGTPDFAVPSLQAIVDASLPVEVVQVVTAPDRPRRKKNAEAEPTPVKSLALQLGLPVLEVEDVKDPGFAEAVRRLQPDVIVVAAFRILPPAVYGAARLGAFNLHASLLPAYRGAAPINHALIEGERESGVTTFFLQRQVDTGNIILKKSTPINSMENATQLAERLSQIGAEAVVETLRLIAEGTVEVSAQDESLVSKAPKLTRENTRIDWNQSAEDLHNFIRGLAMRPTAWTTLGGKNFKIFQSAPAPAVPATSCGKPGTMLIEGGCLYASGTDGWIEILSLQLEGKRPMDAGEFLRGFRAESGVLFGS.

Ser116–Pro119 is a (6S)-5,6,7,8-tetrahydrofolate binding site.

It belongs to the Fmt family.

The catalysed reaction is L-methionyl-tRNA(fMet) + (6R)-10-formyltetrahydrofolate = N-formyl-L-methionyl-tRNA(fMet) + (6S)-5,6,7,8-tetrahydrofolate + H(+). In terms of biological role, attaches a formyl group to the free amino group of methionyl-tRNA(fMet). The formyl group appears to play a dual role in the initiator identity of N-formylmethionyl-tRNA by promoting its recognition by IF2 and preventing the misappropriation of this tRNA by the elongation apparatus. The chain is Methionyl-tRNA formyltransferase from Chlorobium phaeovibrioides (strain DSM 265 / 1930) (Prosthecochloris vibrioformis (strain DSM 265)).